A 307-amino-acid chain; its full sequence is MKFQNALETIGNTPVVKINNLFNSDHEIWIKLEKSNPGGSIKDRIALAMIEDAEAKGLLNKDSTIIEPTSGNTGIGLALVAAVKGYKLILVMPESMSIERRKIMEAYGAEFVLTPREKGMKGAIEKANELAEETPNSWIPRQFDNPANVKIHVETTAQEILQDFPEGLDYVITGVGTGGHITGIAKALKEKYPNLKVIAVEPELSPVLSGGSPAPHPLQGLGAGFVPSILDITLLDGVITVGKDEAYEYAINAAKKEGLFCGSFHRSRLSRYRKTFTGNTAWSKNSLPLITTPEKGIFLLRDSSKIL.

The residue at position 42 (lysine 42) is an N6-(pyridoxal phosphate)lysine. Pyridoxal 5'-phosphate-binding positions include asparagine 72, 176 to 180 (GTGGH), and serine 263.

This sequence belongs to the cysteine synthase/cystathionine beta-synthase family. The cofactor is pyridoxal 5'-phosphate.

It carries out the reaction O-acetyl-L-serine + hydrogen sulfide = L-cysteine + acetate. Its pathway is amino-acid biosynthesis; L-cysteine biosynthesis; L-cysteine from L-serine: step 2/2. This is Cysteine synthase (cysK) from Flavobacterium sp. (strain K3-15 / DSM ID92-509).